We begin with the raw amino-acid sequence, 185 residues long: Probable chorismate pyruvate-lyase (185 aa).

Residues Arg-75, Leu-113, and Glu-170 each contribute to the substrate site.

Belongs to the UbiC family.

The protein localises to the cytoplasm. It catalyses the reaction chorismate = 4-hydroxybenzoate + pyruvate. It functions in the pathway cofactor biosynthesis; ubiquinone biosynthesis. Its function is as follows. Removes the pyruvyl group from chorismate, with concomitant aromatization of the ring, to provide 4-hydroxybenzoate (4HB) for the ubiquinone pathway. The polypeptide is Probable chorismate pyruvate-lyase (Coxiella burnetii (strain RSA 493 / Nine Mile phase I)).